The primary structure comprises 158 residues: Acetolactate synthase small subunit (158 aa).

Residues 4–78 form the ACT domain; it reads ILSVLLENES…DVLRVIKVGQ (75 aa).

Belongs to the acetolactate synthase small subunit family. In terms of assembly, dimer of large and small chains.

It catalyses the reaction 2 pyruvate + H(+) = (2S)-2-acetolactate + CO2. It functions in the pathway amino-acid biosynthesis; L-isoleucine biosynthesis; L-isoleucine from 2-oxobutanoate: step 1/4. Its pathway is amino-acid biosynthesis; L-valine biosynthesis; L-valine from pyruvate: step 1/4. The protein is Acetolactate synthase small subunit (ilvH) of Buchnera aphidicola subsp. Schizaphis graminum (strain Sg).